Reading from the N-terminus, the 430-residue chain is Immunoglobulin heavy constant delta (430 aa).

Residues 1–406 (APTKAPDVFP…FDDVGSLWTT (406 aa)) are Extracellular-facing. Residues 6 to 98 (PDVFPIISGC…TASKSKKEIF (93 aa)) enclose the Ig-like 1 domain. A disulfide bridge connects residues C28 and C84. The tract at residues 96–167 (EIFRWPESPK…TPECPSHTQP (72 aa)) is disordered. Polar residues predominate over residues 106 to 118 (AQASSVPTAQPQA). S109 and S110 each carry an O-linked (GalNAc...) serine glycan. Residues T113, T126, T127, T131, and T132 are each glycosylated (O-linked (GalNAc...) threonine). Basic and acidic residues predominate over residues 138-158 (GGEEKKKEKEKEEQEERETKT). 2 Ig-like domains span residues 175–263 (PAVQ…RLMA) and 267–373 (PAAQ…RSLE). 2 cysteine pairs are disulfide-bonded: C190/C249 and C294/C355. N-linked (GlcNAc...) asparagine glycans are attached at residues N225, N316, and N367. Residues 407–427 (LSTFVALFILTLLYSGIVTFI) traverse the membrane as a helical segment. Topologically, residues 428–430 (KVK) are cytoplasmic.

As to quaternary structure, immunoglobulins are composed of two identical heavy chains and two identical light chains; disulfide-linked. An IgD molecule contains thus a delta heavy chain combined with either a kappa or a lambda light chains. Kappa light chains are found predominantly on the membrane IgD (mIgD) form and lambda on the secreted IgD (sIgD) form, this fact is poorly understood. Membrane-bound IgD molecules are non-covalently associated with a heterodimer of CD79A and CD79B.

It is found in the secreted. Its subcellular location is the cell membrane. Functionally, constant region of immunoglobulin heavy chains. Immunoglobulins, also known as antibodies, are membrane-bound or secreted glycoproteins produced by B lymphocytes. In the recognition phase of humoral immunity, the membrane-bound immunoglobulins serve as receptors which, upon binding of a specific antigen, trigger the clonal expansion and differentiation of B lymphocytes into immunoglobulins-secreting plasma cells. Secreted immunoglobulins mediate the effector phase of humoral immunity, which results in the elimination of bound antigens. The antigen binding site is formed by the variable domain of one heavy chain, together with that of its associated light chain. Thus, each immunoglobulin has two antigen binding sites with remarkable affinity for a particular antigen. The variable domains are assembled by a process called V-(D)-J rearrangement and can then be subjected to somatic hypermutations which, after exposure to antigen and selection, allow affinity maturation for a particular antigen. IgD is the major antigen receptor isotype on the surface of most peripheral B-cells, where it is coexpressed with IgM. The membrane-bound IgD (mIgD) induces the phosphorylation of CD79A and CD79B by the Src family of protein tyrosine kinases. Soluble IgD (sIgD) concentration in serum below those of IgG, IgA, and IgM but much higher than that of IgE. IgM and IgD molecules present on B cells have identical V regions and antigen-binding sites. After the antigen binds to the B-cell receptor, the secreted form sIgD is shut off. IgD is a potent inducer of TNF, IL1B, and IL1RN. IgD also induces release of IL6, IL10, and LIF from peripheral blood mononuclear cells. Monocytes seem to be the main producers of cytokines in vitro in the presence of IgD. The sequence is that of Immunoglobulin heavy constant delta from Homo sapiens (Human).